The chain runs to 759 residues: Phosphoribosylformylglycinamidine synthase subunit PurL (759 aa).

The active site involves His46. ATP is bound by residues Tyr49 and Lys88. A Mg(2+)-binding site is contributed by Glu90. Residues 91 to 94 (SHNH) and Arg113 each bind substrate. Catalysis depends on His92, which acts as the Proton acceptor. Mg(2+) is bound at residue Asp114. Gln237 contributes to the substrate binding site. Asp265 is a binding site for Mg(2+). A substrate-binding site is contributed by 309-311 (ESQ). ATP contacts are provided by Asp498 and Gly535. A Mg(2+)-binding site is contributed by Asn536. A substrate-binding site is contributed by Ser538.

It belongs to the FGAMS family. As to quaternary structure, monomer. Part of the FGAM synthase complex composed of 1 PurL, 1 PurQ and 2 PurS subunits.

It localises to the cytoplasm. It catalyses the reaction N(2)-formyl-N(1)-(5-phospho-beta-D-ribosyl)glycinamide + L-glutamine + ATP + H2O = 2-formamido-N(1)-(5-O-phospho-beta-D-ribosyl)acetamidine + L-glutamate + ADP + phosphate + H(+). It participates in purine metabolism; IMP biosynthesis via de novo pathway; 5-amino-1-(5-phospho-D-ribosyl)imidazole from N(2)-formyl-N(1)-(5-phospho-D-ribosyl)glycinamide: step 1/2. Part of the phosphoribosylformylglycinamidine synthase complex involved in the purines biosynthetic pathway. Catalyzes the ATP-dependent conversion of formylglycinamide ribonucleotide (FGAR) and glutamine to yield formylglycinamidine ribonucleotide (FGAM) and glutamate. The FGAM synthase complex is composed of three subunits. PurQ produces an ammonia molecule by converting glutamine to glutamate. PurL transfers the ammonia molecule to FGAR to form FGAM in an ATP-dependent manner. PurS interacts with PurQ and PurL and is thought to assist in the transfer of the ammonia molecule from PurQ to PurL. The polypeptide is Phosphoribosylformylglycinamidine synthase subunit PurL (Anaeromyxobacter dehalogenans (strain 2CP-1 / ATCC BAA-258)).